The sequence spans 352 residues: Mitochondrial ubiquitin ligase activator of NFKB 1 (352 aa).

Residues 1 to 8 (MESGGRPS) are Cytoplasmic-facing. A helical transmembrane segment spans residues 9–29 (LCQFILLGTTSVVTAALYSVY). Residues 30-238 (RQKARVSQEL…LLQRQESSVR (209 aa)) lie on the Mitochondrial intermembrane side of the membrane. K52 is covalently cross-linked (Glycyl lysine isopeptide (Lys-Gly) (interchain with G-Cter in ubiquitin)). Residues 239 to 259 (LWKVLALVFGFATCATLFFIL) traverse the membrane as a helical segment. The Cytoplasmic segment spans residues 260-352 (RKQYLQRQER…ITRVIPLYNS (93 aa)). Residues K273 and K299 each participate in a glycyl lysine isopeptide (Lys-Gly) (interchain with G-Cter in ubiquitin) cross-link. Residues 302-340 (CVVCLSSFKSCVFLECGHVCSCTECYRALPEPKKCPICR) form an RING-type zinc finger.

In terms of assembly, homooligomer. Interacts with MAP3K7/TAK1. Interacts with UBC9. Interacts with and sumoylates DNM1L. Interacts with MAVS. Interacts with TP53 (via N-terminus); the interaction leads to ubiquitination and proteasomal degradation of TP53. In terms of processing, ubiquitinated by PRKN during mitophagy, leading to its degradation and enhancement of mitophagy. Deubiquitinated by USP30. In terms of tissue distribution, widely expressed with highest levels in the heart, skeletal muscle, placenta, kidney and liver. Barely detectable in colon and thymus.

It is found in the mitochondrion outer membrane. The protein localises to the peroxisome. It carries out the reaction S-ubiquitinyl-[E2 ubiquitin-conjugating enzyme]-L-cysteine + [acceptor protein]-L-lysine = [E2 ubiquitin-conjugating enzyme]-L-cysteine + N(6)-ubiquitinyl-[acceptor protein]-L-lysine.. Its pathway is protein modification; protein ubiquitination. It functions in the pathway protein modification; protein sumoylation. Its function is as follows. Exhibits weak E3 ubiquitin-protein ligase activity. E3 ubiquitin ligases accept ubiquitin from an E2 ubiquitin-conjugating enzyme in the form of a thioester and then directly transfer the ubiquitin to targeted substrates. Can ubiquitinate AKT1 preferentially at 'Lys-284' involving 'Lys-48'-linked polyubiquitination and seems to be involved in regulation of Akt signaling by targeting phosphorylated Akt to proteasomal degradation. Mediates polyubiquitination of cytoplasmic TP53 at 'Lys-24' which targets TP53 for proteasomal degradation, thus reducing TP53 levels in the cytoplasm and mitochondrion. Proposed to preferentially act as a SUMO E3 ligase at physiological concentrations. Plays a role in the control of mitochondrial morphology by promoting mitochondrial fragmentation, and influences mitochondrial localization. Likely to promote mitochondrial fission through negatively regulating the mitochondrial fusion proteins MFN1 and MFN2, acting in a pathway that is parallel to the PRKN/PINK1 regulatory pathway. May also be involved in the sumoylation of the membrane fission protein DNM1L. Inhibits cell growth. When overexpressed, activates JNK through MAP3K7/TAK1 and induces caspase-dependent apoptosis. Involved in the modulation of innate immune defense against viruses by inhibiting RIGI-dependent antiviral response. Can mediate RIGI sumoylation and disrupt its polyubiquitination. In Homo sapiens (Human), this protein is Mitochondrial ubiquitin ligase activator of NFKB 1 (MUL1).